We begin with the raw amino-acid sequence, 674 residues long: Membrane-anchored lipid-binding protein LAM5 (674 aa).

2 disordered regions span residues 1 to 52 (MSDV…LNTE) and 65 to 151 (NQSA…GSPL). Topologically, residues 1–633 (MSDVDNWEPV…AEQQGLKVTM (633 aa)) are cytoplasmic. Residues 69–81 (ADEHPTEIKHDQS) are compositionally biased toward basic and acidic residues. Low complexity predominate over residues 82–119 (RTSSTSSFFSGMISSFKSNVPSPVSRSTTPTSPVSQPS). The residue at position 110 (Thr110) is a Phosphothreonine. Phosphoserine is present on residues Ser113 and Ser140. At Thr143 the chain carries Phosphothreonine. Ser149 is subject to Phosphoserine. Residues 198–264 (KDFHETFKSV…FEDVTFMEKT (67 aa)) form the GRAM domain. A compositionally biased stretch (acidic residues) spans 336 to 357 (IDEENNDKDANDNDTNENDDEN). The segment at 336–380 (IDEENNDKDANDNDTNENDDENISTNETTPNSTSSSPDKEKEKAY) is disordered. The segment covering 358–371 (ISTNETTPNSTSSS) has biased composition (low complexity). A VASt domain is found at 409 to 582 (NEFVLKELPF…ILSKFIKNNV (174 aa)). The helical transmembrane segment at 634-654 (ETWLFLYLIVVVLLLFNLFYI) threads the bilayer. Over 655–674 (RSIAVSLHQLVKLQLVELKL) the chain is Lumenal.

It belongs to the YSP2 family.

It is found in the endoplasmic reticulum membrane. Its function is as follows. May be involved in sterol transfer between intracellular membranes. This is Membrane-anchored lipid-binding protein LAM5 from Saccharomyces cerevisiae (strain ATCC 204508 / S288c) (Baker's yeast).